We begin with the raw amino-acid sequence, 328 residues long: MSDILDYPDVSSPAAAPDLADLGGEPARARPSSHLQRLESESIHILREVAAEFRKPVMLYSIGKDSSVLLHLAMKAFAPGKPPFPLLHVDTTWKFREMIAFRDQRIRELGLDLLVHVNPDGVAQRVGPFSHGSARHTDVMKTQALRQALDAHGFDAAIGGARRDEEKSRAKERIFSHRSAAHRWDPKNQRPELWSLYNTMLAPGESMRVFPLSNWTELDIWDYILIERIPIVPLYFAAERPVVERDGALILVDDERMPLRPGEVPQWRSVRFRTLGCYPLTGAVPSTATTLPAIVQEMMASRSSEREGRVIDRDSTASMERKKAEGYF.

Disordered stretches follow at residues 15–34 and 304–328; these read AAPD…PSSH and SERE…EGYF.

Belongs to the PAPS reductase family. CysD subfamily. As to quaternary structure, heterodimer composed of CysD, the smaller subunit, and CysN.

It carries out the reaction sulfate + ATP + H(+) = adenosine 5'-phosphosulfate + diphosphate. The protein operates within sulfur metabolism; hydrogen sulfide biosynthesis; sulfite from sulfate: step 1/3. In terms of biological role, with CysN forms the ATP sulfurylase (ATPS) that catalyzes the adenylation of sulfate producing adenosine 5'-phosphosulfate (APS) and diphosphate, the first enzymatic step in sulfur assimilation pathway. APS synthesis involves the formation of a high-energy phosphoric-sulfuric acid anhydride bond driven by GTP hydrolysis by CysN coupled to ATP hydrolysis by CysD. The chain is Sulfate adenylyltransferase subunit 2 from Rhodopseudomonas palustris (strain BisA53).